Here is a 166-residue protein sequence, read N- to C-terminus: NAD(P)H-quinone oxidoreductase subunit I, chloroplastic (166 aa).

4Fe-4S ferredoxin-type domains are found at residues 55 to 84 and 95 to 124; these read GRIH…VDWQ and VNYS…MTEE. Residues Cys-64, Cys-67, Cys-70, Cys-74, Cys-104, Cys-107, Cys-110, and Cys-114 each contribute to the [4Fe-4S] cluster site.

It belongs to the complex I 23 kDa subunit family. NDH is composed of at least 16 different subunits, 5 of which are encoded in the nucleus. It depends on [4Fe-4S] cluster as a cofactor.

The protein resides in the plastid. The protein localises to the chloroplast thylakoid membrane. It catalyses the reaction a plastoquinone + NADH + (n+1) H(+)(in) = a plastoquinol + NAD(+) + n H(+)(out). The enzyme catalyses a plastoquinone + NADPH + (n+1) H(+)(in) = a plastoquinol + NADP(+) + n H(+)(out). In terms of biological role, NDH shuttles electrons from NAD(P)H:plastoquinone, via FMN and iron-sulfur (Fe-S) centers, to quinones in the photosynthetic chain and possibly in a chloroplast respiratory chain. The immediate electron acceptor for the enzyme in this species is believed to be plastoquinone. Couples the redox reaction to proton translocation, and thus conserves the redox energy in a proton gradient. The sequence is that of NAD(P)H-quinone oxidoreductase subunit I, chloroplastic from Coreopsis petrophiloides (Tickseed).